The primary structure comprises 314 residues: Large ribosomal subunit protein uL10 (314 aa).

Residues G281–Q314 are disordered. The segment covering P287 to D302 has biased composition (basic and acidic residues).

The protein belongs to the universal ribosomal protein uL10 family. In terms of assembly, part of the 50S ribosomal subunit. Forms part of the ribosomal stalk which helps the ribosome interact with GTP-bound translation factors. Forms a heptameric L10(L12)2(L12)2(L12)2 complex, where L10 forms an elongated spine to which the L12 dimers bind in a sequential fashion.

In terms of biological role, forms part of the ribosomal stalk, playing a central role in the interaction of the ribosome with GTP-bound translation factors. The protein is Large ribosomal subunit protein uL10 of Thermoplasma acidophilum (strain ATCC 25905 / DSM 1728 / JCM 9062 / NBRC 15155 / AMRC-C165).